We begin with the raw amino-acid sequence, 751 residues long: Centrosomal protein of 68 kDa (751 aa).

Basic and acidic residues-rich tracts occupy residues 1-17 (MALG…EDTK) and 86-96 (ASREPVAERSE). The tract at residues 1–253 (MALGEEKAEA…PQPVFSGGDA (253 aa)) is disordered. 2 stretches are compositionally biased toward polar residues: residues 131-144 (LPQT…TTIC) and 163-175 (APSS…SQWK). A compositionally biased stretch (low complexity) spans 176–200 (SMPSPGSAAPQPSSCSVSASSTGSS). Residue Ser326 is modified to Phosphoserine. Residues 339–348 (STLKSPTNVF) show a composition bias toward polar residues. 3 disordered regions span residues 339-474 (STLK…ESDD), 511-545 (SPLE…SGDP), and 590-611 (RLDR…KGGE). Composition is skewed to basic and acidic residues over residues 399–416 (GSRD…RGAK) and 433–450 (RTRD…EKRT). Positions 451–461 (SQSARRPTCTE) are enriched in polar residues. Ser466 and Ser472 each carry phosphoserine. A compositionally biased stretch (low complexity) spans 520–537 (GPASLPSSSSQSQLPPGA).

Interacts with CNTLN; the interaction recruits CEP68 to the centrosome. Interacts with the SCF(FBXW11) complex which contains SKP1, CUL1 and FBXW11; the interaction is probably mediated by FBXW11 and the complex also contains CDK5RAP2 and PCNT. Also interacts with F-box protein BTRC. Interacts with serine/threonine-protein kinase PLK1; the interaction leads to phosphorylation of CEP68 and its subsequent degradation. Interacts with NEK2; the interaction leads to phosphorylation of CEP68. Post-translationally, phosphorylation by PLK1 is required for binding to BTRC in prometaphase. Phosphorylated directly or indirectly by NEK2. NEK2-mediated phosphorylation promotes CEP68 dissociation from the centrosome and its degradation at the onset of mitosis. Ubiquitinated and targeted for proteasomal degradation in early mitosis by the SCF(BTRC) and/or SCF(FBXW11) E3 ubiquitin-protein ligase complexes. Degradation is complete by prometaphase and is required for removal of CDK5RAP2 from the peripheral pericentriolar material and subsequent centriole separation.

It is found in the cytoplasm. The protein localises to the cytoskeleton. The protein resides in the microtubule organizing center. Its subcellular location is the centrosome. Its function is as follows. Involved in maintenance of centrosome cohesion, probably as part of a linker structure which prevents centrosome splitting. Required for localization of CDK5RAP2 to the centrosome during interphase. Contributes to CROCC/rootletin filament formation. This is Centrosomal protein of 68 kDa (CEP68) from Pongo abelii (Sumatran orangutan).